A 158-amino-acid polypeptide reads, in one-letter code: Endoribonuclease YbeY (158 aa).

Residues H117, H121, and H127 each contribute to the Zn(2+) site.

The protein belongs to the endoribonuclease YbeY family. It depends on Zn(2+) as a cofactor.

Its subcellular location is the cytoplasm. In terms of biological role, single strand-specific metallo-endoribonuclease involved in late-stage 70S ribosome quality control and in maturation of the 3' terminus of the 16S rRNA. In Francisella philomiragia subsp. philomiragia (strain ATCC 25017 / CCUG 19701 / FSC 153 / O#319-036), this protein is Endoribonuclease YbeY.